Here is an 87-residue protein sequence, read N- to C-terminus: Cell division topological specificity factor (87 aa).

It belongs to the MinE family.

Prevents the cell division inhibition by proteins MinC and MinD at internal division sites while permitting inhibition at polar sites. This ensures cell division at the proper site by restricting the formation of a division septum at the midpoint of the long axis of the cell. The polypeptide is Cell division topological specificity factor (Roseiflexus castenholzii (strain DSM 13941 / HLO8)).